Consider the following 237-residue polypeptide: Thiamine-phosphate synthase (237 aa).

4-amino-2-methyl-5-(diphosphooxymethyl)pyrimidine contacts are provided by residues 41–45 (QLRDK) and N73. D74 and D93 together coordinate Mg(2+). 4-amino-2-methyl-5-(diphosphooxymethyl)pyrimidine is bound at residue S112. 143–145 (TPT) contributes to the 2-[(2R,5Z)-2-carboxy-4-methylthiazol-5(2H)-ylidene]ethyl phosphate binding site. Position 146 (K146) interacts with 4-amino-2-methyl-5-(diphosphooxymethyl)pyrimidine. Residue G192 coordinates 2-[(2R,5Z)-2-carboxy-4-methylthiazol-5(2H)-ylidene]ethyl phosphate.

Belongs to the thiamine-phosphate synthase family. Mg(2+) is required as a cofactor.

It catalyses the reaction 2-[(2R,5Z)-2-carboxy-4-methylthiazol-5(2H)-ylidene]ethyl phosphate + 4-amino-2-methyl-5-(diphosphooxymethyl)pyrimidine + 2 H(+) = thiamine phosphate + CO2 + diphosphate. The enzyme catalyses 2-(2-carboxy-4-methylthiazol-5-yl)ethyl phosphate + 4-amino-2-methyl-5-(diphosphooxymethyl)pyrimidine + 2 H(+) = thiamine phosphate + CO2 + diphosphate. It carries out the reaction 4-methyl-5-(2-phosphooxyethyl)-thiazole + 4-amino-2-methyl-5-(diphosphooxymethyl)pyrimidine + H(+) = thiamine phosphate + diphosphate. The protein operates within cofactor biosynthesis; thiamine diphosphate biosynthesis; thiamine phosphate from 4-amino-2-methyl-5-diphosphomethylpyrimidine and 4-methyl-5-(2-phosphoethyl)-thiazole: step 1/1. Functionally, condenses 4-methyl-5-(beta-hydroxyethyl)thiazole monophosphate (THZ-P) and 2-methyl-4-amino-5-hydroxymethyl pyrimidine pyrophosphate (HMP-PP) to form thiamine monophosphate (TMP). In Arthrobacter sp. (strain FB24), this protein is Thiamine-phosphate synthase.